We begin with the raw amino-acid sequence, 464 residues long: Neuronal acetylcholine receptor subunit beta-3 (464 aa).

The N-terminal stretch at 1 to 30 is a signal peptide; it reads MTGFLRVFLVLSATLSGSWVTLTATAGLSS. Over 31–238 the chain is Extracellular; it reads VAEHEDALLR…VTYSFVLRRL (208 aa). N-linked (GlcNAc...) asparagine glycosylation is found at asparagine 55 and asparagine 172. Cysteine 159 and cysteine 173 are joined by a disulfide. The next 3 helical transmembrane spans lie at 239 to 263, 271 to 288, and 305 to 326; these read PLFYTLFLIIPCLGLSFLTVLVFYL, LSLSTSVLVSLTVFLLVI, and YLLFIMIFVTLSIIVTVFVINV. The Cytoplasmic segment spans residues 327-434; the sequence is HHRSSSTYHP…WKFVAQVLDR (108 aa). Residues 435–453 traverse the membrane as a helical segment; it reads IFLWLFLIASVLGSILIFI.

This sequence belongs to the ligand-gated ion channel (TC 1.A.9) family. Acetylcholine receptor (TC 1.A.9.1) subfamily. Beta-3/CHRNB3 sub-subfamily. As to quaternary structure, neuronal AChR seems to be composed of two different type of subunits: alpha and beta. CHRNB3/beta-3 subunit is only able to form functional nAChRs when co-assembled with another beta subunit. Participates in pentameric assemblies along with CHRNA4/alpha-4 and CHRNB2/beta-2 subunits and with CHRNA6/alpha-6 as well, forming stoichiometries such as (CHRNA3:CHRNB4)2:CHRNB3, (CHRNA4:CHRNB2)2:CHRNB3 or (CHRNA6:CHRNB2)2:CHRNB3.

The protein resides in the synaptic cell membrane. Its subcellular location is the cell membrane. The catalysed reaction is Ca(2+)(in) = Ca(2+)(out). It carries out the reaction K(+)(in) = K(+)(out). It catalyses the reaction Na(+)(in) = Na(+)(out). Its activity is regulated as follows. Activated by a myriad of ligands such as acetylcholine, cytisine, nicotine, choline and epibatidine. Its function is as follows. Component of neuronal acetylcholine receptors (nAChRs) that function as pentameric, ligand-gated cation channels with high calcium permeability among other activities. nAChRs are excitatory neurotrasnmitter receptors formed by a collection of nAChR subunits known to mediate synaptic transmission in the nervous system and the neuromuscular junction. Each nAchR subunit confers differential attributes to channel properties, including activation, deactivation and desensitization kinetics, pH sensitivity, cation permeability, and binding to allosteric modulators. Has an accessory rather than functional role and is only able to form functional nAChRs when co-assembled with another beta subunit. Participates in pentameric assemblies along with CHRNA3, CHRNA4, CHRNA6, CHRNB2 and CHRNB4. Modulates receptor assembly and increases receptor sensitivity to nicotine when associated with CHRNB2, CHRNA4 and/or CHRNA6 as well as CHRNA3 and CHRNB4. Seems to play a role in nicotine addiction. In Rattus norvegicus (Rat), this protein is Neuronal acetylcholine receptor subunit beta-3 (Chrnb3).